The primary structure comprises 373 residues: NK1 transcription factor-related protein 1 (373 aa).

Disordered stretches follow at residues 49–74 (ALPA…TVHR), 149–231 (SDFT…RRAR), and 281–328 (KWKK…SMHT). A compositionally biased stretch (basic and acidic residues) spans 53 to 63 (ESRETSPRHEP). Positions 168 to 177 (EESSALTGNN) are enriched in polar residues. A compositionally biased stretch (low complexity) spans 196-210 (GQQTQQSSSNGQNHQ). The homeobox DNA-binding region spans 227–286 (PRRARTAFTYEQLVALENKFKSTRYLSVCERLNLALSLSLTETQVKIWFQNRRTKWKKQN). The span at 296–310 (SGGGGGNGPSNGLGG) shows a compositional bias: gly residues.

It belongs to the NK-1 homeobox family.

It is found in the nucleus. May participate in the energy homeostasis regulation. This chain is NK1 transcription factor-related protein 1, found in Danio rerio (Zebrafish).